Here is a 234-residue protein sequence, read N- to C-terminus: Sugar fermentation stimulation protein A (234 aa).

Residues 201–220 constitute a DNA-binding region (H-T-H motif); that stretch reads LLSEAQNKGVEVLAYKAELS.

This sequence belongs to the SfsA family.

Binds to DNA non-specifically. Could be a regulatory factor involved in maltose metabolism. In Salmonella choleraesuis (strain SC-B67), this protein is Sugar fermentation stimulation protein A.